The following is a 286-amino-acid chain: Pyridoxal kinase PdxY (286 aa).

Residues serine 9 and 44 to 45 (TQ) each bind substrate. ATP-binding residues include aspartate 111, glutamate 148, and lysine 181. Aspartate 222 serves as a coordination point for substrate.

The protein belongs to the pyridoxine kinase family. PdxY subfamily. In terms of assembly, homodimer. Mg(2+) serves as cofactor.

It carries out the reaction pyridoxal + ATP = pyridoxal 5'-phosphate + ADP + H(+). It functions in the pathway cofactor metabolism; pyridoxal 5'-phosphate salvage; pyridoxal 5'-phosphate from pyridoxal: step 1/1. Functionally, pyridoxal kinase involved in the salvage pathway of pyridoxal 5'-phosphate (PLP). Catalyzes the phosphorylation of pyridoxal to PLP. The protein is Pyridoxal kinase PdxY of Histophilus somni (strain 129Pt) (Haemophilus somnus).